Here is a 244-residue protein sequence, read N- to C-terminus: L-xylulose reductase (244 aa).

M1 carries the N-acetylmethionine modification. 11-39 (LVTGAGKGIGRSIVKALHAAGARVVAVSR) provides a ligand contact to NADP(+). Position 21 is an omega-N-methylarginine (R21). Phosphoserine is present on S46. S136 lines the substrate pocket. The active-site Proton acceptor is Y149. K153 is an active-site residue.

This sequence belongs to the short-chain dehydrogenases/reductases (SDR) family. As to quaternary structure, homotetramer.

The protein localises to the membrane. It carries out the reaction xylitol + NADP(+) = L-xylulose + NADPH + H(+). Its function is as follows. Catalyzes the NADPH-dependent reduction of several pentoses, tetroses, trioses, alpha-dicarbonyl compounds and L-xylulose. Participates in the uronate cycle of glucose metabolism. May play a role in the water absorption and cellular osmoregulation in the proximal renal tubules by producing xylitol, an osmolyte, thereby preventing osmolytic stress from occurring in the renal tubules. This Bos taurus (Bovine) protein is L-xylulose reductase (DCXR).